The sequence spans 823 residues: Apoptosis-resistant E3 ubiquitin protein ligase 1 (823 aa).

One copy of the Filamin repeat lies at 64–158 (WDWKDPYEVG…VAYSPYYKIF (95 aa)). The disordered stretch occupies residues 315–345 (PPMHMSSSQRRPSTAIEEDDEDSPSECHTPE). An interaction with SOCS2 region spans residues 483–789 (SISDWSKNFE…THSTLPTAHT (307 aa)). Residues 483–823 (SISDWSKNFE…SEGCEGFGML (341 aa)) enclose the HECT domain. Cysteine 790 serves as the catalytic Glycyl thioester intermediate.

Interacts with SOCS2. Interacts (via HECT domain) with HTRA2, DIABLO/SMAC and SEPTIN4; in the cytoplasm following induction of apoptosis. Autoubiquitinated in vitro in the presence of E2 enzyme UBE2D1/UBCH5A. In terms of tissue distribution, detected in brain, testis, heart, liver, lung and kidney with very low levels in skeletal muscle and spleen.

It carries out the reaction S-ubiquitinyl-[E2 ubiquitin-conjugating enzyme]-L-cysteine + [acceptor protein]-L-lysine = [E2 ubiquitin-conjugating enzyme]-L-cysteine + N(6)-ubiquitinyl-[acceptor protein]-L-lysine.. It functions in the pathway protein modification; protein ubiquitination. Its function is as follows. E3 ubiquitin-protein ligase that catalyzes 'Lys-11'- or 'Lys-33'-linked polyubiquitin chains, with some preference for 'Lys-33' linkages. E3 ubiquitin-protein ligases accept ubiquitin from an E2 ubiquitin-conjugating enzyme in the form of a thioester and then directly transfers the ubiquitin to targeted substrates. Ubiquitinates SEPTIN4, DIABLO/SMAC and HTRA2 in vitro. Modulates pulmonary inflammation by targeting SOCS2 for ubiquitination and subsequent degradation by the proteasome. In Mus musculus (Mouse), this protein is Apoptosis-resistant E3 ubiquitin protein ligase 1 (Arel1).